We begin with the raw amino-acid sequence, 72 residues long: Translation initiation factor IF-1 (72 aa).

One can recognise an S1-like domain in the interval 1-72; sequence MSKDDCIEFE…TKGRIIYRMK (72 aa).

This sequence belongs to the IF-1 family. Component of the 30S ribosomal translation pre-initiation complex which assembles on the 30S ribosome in the order IF-2 and IF-3, IF-1 and N-formylmethionyl-tRNA(fMet); mRNA recruitment can occur at any time during PIC assembly.

It is found in the cytoplasm. Its function is as follows. One of the essential components for the initiation of protein synthesis. Stabilizes the binding of IF-2 and IF-3 on the 30S subunit to which N-formylmethionyl-tRNA(fMet) subsequently binds. Helps modulate mRNA selection, yielding the 30S pre-initiation complex (PIC). Upon addition of the 50S ribosomal subunit IF-1, IF-2 and IF-3 are released leaving the mature 70S translation initiation complex. This is Translation initiation factor IF-1 from Xylella fastidiosa (strain 9a5c).